The sequence spans 210 residues: Outer-membrane lipoprotein LolB (210 aa).

An N-terminal signal peptide occupies residues 1–18; that stretch reads MKKLTKLLSLTLLFALAG. A lipid anchor (N-palmitoyl cysteine) is attached at cysteine 19. The S-diacylglycerol cysteine moiety is linked to residue cysteine 19.

It belongs to the LolB family. As to quaternary structure, monomer.

It is found in the cell outer membrane. In terms of biological role, plays a critical role in the incorporation of lipoproteins in the outer membrane after they are released by the LolA protein. The chain is Outer-membrane lipoprotein LolB from Glaesserella parasuis serovar 5 (strain SH0165) (Haemophilus parasuis).